We begin with the raw amino-acid sequence, 80 residues long: Translation initiation factor IF-1, chloroplastic (80 aa).

Positions 1-72 (MKEHDLINME…TKGRILYRIR (72 aa)) constitute an S1-like domain.

Belongs to the IF-1 family. As to quaternary structure, component of the 30S ribosomal translation pre-initiation complex which assembles on the 30S ribosome in the order IF-2 and IF-3, IF-1 and N-formylmethionyl-tRNA(fMet); mRNA recruitment can occur at any time during PIC assembly.

The protein resides in the plastid. The protein localises to the chloroplast. One of the essential components for the initiation of protein synthesis. Stabilizes the binding of IF-2 and IF-3 on the 30S subunit to which N-formylmethionyl-tRNA(fMet) subsequently binds. Helps modulate mRNA selection, yielding the 30S pre-initiation complex (PIC). Upon addition of the 50S ribosomal subunit IF-1, IF-2 and IF-3 are released leaving the mature 70S translation initiation complex. The polypeptide is Translation initiation factor IF-1, chloroplastic (Psilotum nudum (Whisk fern)).